Here is a 211-residue protein sequence, read N- to C-terminus: 3,4-dihydroxy-2-butanone 4-phosphate synthase (211 aa).

Residues 37–38 (RE), Asp-42, 150–154 (RIGHT), and Glu-174 contribute to the D-ribulose 5-phosphate site. Glu-38 is a binding site for Mg(2+). His-153 is a binding site for Mg(2+).

It belongs to the DHBP synthase family. In terms of assembly, homodimer. Mg(2+) is required as a cofactor. Mn(2+) serves as cofactor.

The enzyme catalyses D-ribulose 5-phosphate = (2S)-2-hydroxy-3-oxobutyl phosphate + formate + H(+). Its pathway is cofactor biosynthesis; riboflavin biosynthesis; 2-hydroxy-3-oxobutyl phosphate from D-ribulose 5-phosphate: step 1/1. Functionally, catalyzes the conversion of D-ribulose 5-phosphate to formate and 3,4-dihydroxy-2-butanone 4-phosphate. This chain is 3,4-dihydroxy-2-butanone 4-phosphate synthase, found in Buchnera aphidicola subsp. Baizongia pistaciae (strain Bp).